The chain runs to 330 residues: MTSNLEAQLLALRQEGEKAIAAADTLERLEELRVNYLGKKGELGALLRSMGQMSAEERPKIGAIANTVKESLQTSLDQQRVALEAAQIQVQLEAETLDVTMPGIYSPQGRIHPLNGIIDRALDIFVGMGYTVAQGPEMETDYYNFEALNTPPDHPARDMQDTFYLPDGNLLRTHTSSVQIRYMEREEPPIRVVAPGRVYRRDNVDATHSAVFHQIELLAIDEGLTFTDLKGTIKVFLQAIFGDLPIRFRASYFPFTEPSAEVDLQWNGRWLEVMGCGMVDPNVLKSVGYDPEVYTGFAAGFGVERFAMVLHQIDDIRRLYASDLRFLQQF.

E257 is a binding site for Mg(2+).

It belongs to the class-II aminoacyl-tRNA synthetase family. Phe-tRNA synthetase alpha subunit type 1 subfamily. Tetramer of two alpha and two beta subunits. The cofactor is Mg(2+).

Its subcellular location is the cytoplasm. It catalyses the reaction tRNA(Phe) + L-phenylalanine + ATP = L-phenylalanyl-tRNA(Phe) + AMP + diphosphate + H(+). This is Phenylalanine--tRNA ligase alpha subunit from Nostoc punctiforme (strain ATCC 29133 / PCC 73102).